The sequence spans 313 residues: Porphobilinogen deaminase (313 aa).

Cysteine 241 carries the S-(dipyrrolylmethanemethyl)cysteine modification.

It belongs to the HMBS family. Monomer. Dipyrromethane serves as cofactor.

It carries out the reaction 4 porphobilinogen + H2O = hydroxymethylbilane + 4 NH4(+). It participates in porphyrin-containing compound metabolism; protoporphyrin-IX biosynthesis; coproporphyrinogen-III from 5-aminolevulinate: step 2/4. Its pathway is porphyrin-containing compound metabolism; chlorophyll biosynthesis. In terms of biological role, tetrapolymerization of the monopyrrole PBG into the hydroxymethylbilane pre-uroporphyrinogen in several discrete steps. The polypeptide is Porphobilinogen deaminase (Chlorobium limicola (strain DSM 245 / NBRC 103803 / 6330)).